The chain runs to 196 residues: Ribonuclease HII (196 aa).

The region spanning 15-196 (YIVAGIDEAG…RKSFRYSCFI (182 aa)) is the RNase H type-2 domain. The a divalent metal cation site is built by D21, E22, and D112.

This sequence belongs to the RNase HII family. It depends on Mn(2+) as a cofactor. Mg(2+) serves as cofactor.

Its subcellular location is the cytoplasm. It carries out the reaction Endonucleolytic cleavage to 5'-phosphomonoester.. In terms of biological role, endonuclease that specifically degrades the RNA of RNA-DNA hybrids. The chain is Ribonuclease HII from Rickettsia canadensis (strain McKiel).